A 458-amino-acid polypeptide reads, in one-letter code: Exodeoxyribonuclease 7 large subunit (458 aa).

This sequence belongs to the XseA family. Heterooligomer composed of large and small subunits.

Its subcellular location is the cytoplasm. The enzyme catalyses Exonucleolytic cleavage in either 5'- to 3'- or 3'- to 5'-direction to yield nucleoside 5'-phosphates.. Bidirectionally degrades single-stranded DNA into large acid-insoluble oligonucleotides, which are then degraded further into small acid-soluble oligonucleotides. This is Exodeoxyribonuclease 7 large subunit from Escherichia coli (strain UTI89 / UPEC).